Consider the following 187-residue polypeptide: Elongation factor P (187 aa).

This sequence belongs to the elongation factor P family.

Its subcellular location is the cytoplasm. The protein operates within protein biosynthesis; polypeptide chain elongation. Functionally, involved in peptide bond synthesis. Stimulates efficient translation and peptide-bond synthesis on native or reconstituted 70S ribosomes in vitro. Probably functions indirectly by altering the affinity of the ribosome for aminoacyl-tRNA, thus increasing their reactivity as acceptors for peptidyl transferase. The polypeptide is Elongation factor P (Desulfatibacillum aliphaticivorans).